A 393-amino-acid polypeptide reads, in one-letter code: Nucleosome assembly protein 1-like 1 (393 aa).

The span at 1–10 (MANIDNKEQT) shows a compositional bias: basic and acidic residues. Disordered stretches follow at residues 1 to 36 (MANIDNKEQTELDQQDMEDVEDIEEEEAGEDANSKA) and 132 to 165 (ECEWKVDEEEDISGDLKDKAKLEEEKKDEEKEDP). 2 stretches are compositionally biased toward acidic residues: residues 11–30 (ELDQQDMEDVEDIEEEEAGE) and 132–144 (ECEWKVDEEEDIS). An NAP1L motif motif is present at residues 126–151 (YEPTEEECEWKVDEEEDISGDLKDKA). A compositionally biased stretch (basic and acidic residues) spans 145 to 165 (GDLKDKAKLEEEKKDEEKEDP). The Nuclear localization signal motif lies at 274-280 (IKKKQKH). The segment covering 347-378 (AIEDDDDDYDEEGEEADDEEGEEEADEDNDPD) has biased composition (acidic residues). The disordered stretch occupies residues 347 to 393 (AIEDDDDDYDEEGEEADDEEGEEEADEDNDPDYEPKKDQNPAECKQQ). Residues 379–393 (YEPKKDQNPAECKQQ) are compositionally biased toward basic and acidic residues.

Belongs to the nucleosome assembly protein (NAP) family. Forms homomultimers. Interacts with histone B4. Interacts with the B-type cyclins ccnb1 and ccnb2. In terms of processing, phosphorylated by cyclin B-cdc2 kinase complexes.

It localises to the cytoplasm. The protein localises to the nucleus. Acts as a chaperone for the linker histone to facilitate deposition of histone B4 onto linker DNA. Required for both remodeling of sperm chromatin into nucleosomes, and linker histone binding to nucleosome core dimers. Plays a role in tissue-specific gene regulation. Required for primitive hemopoiesis, acting upstream of tal1/scl. The chain is Nucleosome assembly protein 1-like 1 from Xenopus tropicalis (Western clawed frog).